The sequence spans 212 residues: Peptidyl-prolyl cis-trans isomerase-like 3 (212 aa).

The region spanning 1-198 (MSVTLHTTHG…EGEEGGYEAI (198 aa)) is the PPIase cyclophilin-type domain.

It belongs to the cyclophilin-type PPIase family. PPIL3 subfamily.

It carries out the reaction [protein]-peptidylproline (omega=180) = [protein]-peptidylproline (omega=0). Its function is as follows. PPIases accelerate the folding of proteins. It catalyzes the cis-trans isomerization of proline imidic peptide bonds in oligopeptides. The polypeptide is Peptidyl-prolyl cis-trans isomerase-like 3 (cyp10) (Aspergillus fumigatus (strain ATCC MYA-4609 / CBS 101355 / FGSC A1100 / Af293) (Neosartorya fumigata)).